The chain runs to 460 residues: Argininosuccinate lyase (460 aa).

It belongs to the lyase 1 family. Argininosuccinate lyase subfamily.

It is found in the cytoplasm. It catalyses the reaction 2-(N(omega)-L-arginino)succinate = fumarate + L-arginine. It functions in the pathway amino-acid biosynthesis; L-arginine biosynthesis; L-arginine from L-ornithine and carbamoyl phosphate: step 3/3. In Prosthecochloris aestuarii (strain DSM 271 / SK 413), this protein is Argininosuccinate lyase.